A 363-amino-acid polypeptide reads, in one-letter code: G-protein coupled receptor 6 (363 aa).

The Extracellular segment spans residues 1–75 (MNASAAALNE…SGLLLSAVNP (75 aa)). 2 N-linked (GlcNAc...) asparagine glycosylation sites follow: asparagine 2 and asparagine 9. A disordered region spans residues 29–48 (GAPDTGEWGPPAASAALGGG). An N-linked (GlcNAc...) asparagine glycan is attached at asparagine 52. The chain crosses the membrane as a helical span at residues 76–95 (WDVLLCVSGTVIAGENALVV). The Cytoplasmic segment spans residues 96–107 (ALIASTPALRTP). Residues 108–131 (MFVLVGSLATADLLAGCGLILHFV) form a helical membrane-spanning segment. The Extracellular segment spans residues 132–143 (FQYVVPSETVSL). A helical membrane pass occupies residues 144 to 165 (LMVGFLVASFAASVSSLLAITV). The Cytoplasmic portion of the chain corresponds to 166 to 186 (DRYLSLYNALTYYSRRTLLGV). Residues 187-206 (HLLLAATWTVSLGLGLLPVL) traverse the membrane as a helical segment. Residues 207–231 (GWNCLADRTSCSVVRPLTRSHVALL) lie on the Extracellular side of the membrane. The helical transmembrane segment at 232–250 (STSFFVVFGIMLHLYVRIC) threads the bilayer. Over 251–278 (QVVWRHAHQIALQQHCLAPPHLAATRKG) the chain is Cytoplasmic. The helical transmembrane segment at 279–305 (VGTLAVVLGTFGASWLPFAIYCVVGSQ) threads the bilayer. Residues 306–310 (EDPAI) lie on the Extracellular side of the membrane. The helical transmembrane segment at 311–332 (YTYATLLPATYNSMINPIIYAF) threads the bilayer. At 333-363 (RNQEIQRALWLLFCGCFQSKVPFRSRSPSEV) the chain is on the cytoplasmic side. Residue cysteine 346 is the site of S-palmitoyl cysteine attachment. 3 positions are modified to phosphoserine: serine 357, serine 359, and serine 361.

This sequence belongs to the G-protein coupled receptor 1 family. Mainly expressed in the brain. Selectively expressed in striatopallidal neurons in the striatum.

The protein localises to the cell membrane. Orphan receptor with constitutive G(s) signaling activity that activate cyclic AMP. Promotes neurite outgrowth and blocks myelin inhibition in neurons. The sequence is that of G-protein coupled receptor 6 (Gpr6) from Mus musculus (Mouse).